The sequence spans 190 residues: dCTP deaminase (190 aa).

113-118 (KSTYAR) is a binding site for dCTP. Residue Glu139 is the Proton donor/acceptor of the active site. DCTP is bound by residues Gln158, Tyr172, Lys181, and Gln182.

Belongs to the dCTP deaminase family. Homotrimer.

It catalyses the reaction dCTP + H2O + H(+) = dUTP + NH4(+). Its pathway is pyrimidine metabolism; dUMP biosynthesis; dUMP from dCTP (dUTP route): step 1/2. In terms of biological role, catalyzes the deamination of dCTP to dUTP. The protein is dCTP deaminase of Chlamydia felis (strain Fe/C-56) (Chlamydophila felis).